We begin with the raw amino-acid sequence, 248 residues long: MAGHSQFKNIMHRKGKQDAMRSKVFGKLAREITVAAKLGTPDPAMNPRLRAAVLAARAENMPKDNIERAIKKAAGGDSENYDEIRYEGYGPGGVAVIVEALTDNRNRAASDIRSYFTKSGGNLGETGSVSFMFDRVGVIEYDADKASADDMLEAAIEAGADDVASSEEGHEIYTSQASLSEAAKALEAKFGEPRKAALIWKPQNNIAVSDEVGEKLFKLLDQLNEHDDVQNVYANFEVSDTLAAKMAG.

This sequence belongs to the TACO1 family.

The protein localises to the cytoplasm. In Afipia carboxidovorans (strain ATCC 49405 / DSM 1227 / KCTC 32145 / OM5) (Oligotropha carboxidovorans), this protein is Probable transcriptional regulatory protein OCAR_7305/OCA5_c08120.